A 139-amino-acid polypeptide reads, in one-letter code: Chemical-damaging agent resistance protein B (139 aa).

It belongs to the CAPAB/TerDEXZ family.

Functionally, not known; could confer methyl methane sulfonate (MMS), mitomycin C (MC), and UV resistance. This chain is Chemical-damaging agent resistance protein B, found in Clostridium acetobutylicum.